Consider the following 263-residue polypeptide: Imidazole glycerol phosphate synthase subunit HisF (263 aa).

Active-site residues include Asp22 and Asp141.

Belongs to the HisA/HisF family. In terms of assembly, heterodimer of HisH and HisF.

Its subcellular location is the cytoplasm. The catalysed reaction is 5-[(5-phospho-1-deoxy-D-ribulos-1-ylimino)methylamino]-1-(5-phospho-beta-D-ribosyl)imidazole-4-carboxamide + L-glutamine = D-erythro-1-(imidazol-4-yl)glycerol 3-phosphate + 5-amino-1-(5-phospho-beta-D-ribosyl)imidazole-4-carboxamide + L-glutamate + H(+). The protein operates within amino-acid biosynthesis; L-histidine biosynthesis; L-histidine from 5-phospho-alpha-D-ribose 1-diphosphate: step 5/9. Its function is as follows. IGPS catalyzes the conversion of PRFAR and glutamine to IGP, AICAR and glutamate. The HisF subunit catalyzes the cyclization activity that produces IGP and AICAR from PRFAR using the ammonia provided by the HisH subunit. This Clavibacter michiganensis subsp. michiganensis (strain NCPPB 382) protein is Imidazole glycerol phosphate synthase subunit HisF.